A 470-amino-acid polypeptide reads, in one-letter code: ATP synthase subunit beta (470 aa).

An ATP-binding site is contributed by 155 to 162; that stretch reads GGAGVGKT.

It belongs to the ATPase alpha/beta chains family. As to quaternary structure, F-type ATPases have 2 components, CF(1) - the catalytic core - and CF(0) - the membrane proton channel. CF(1) has five subunits: alpha(3), beta(3), gamma(1), delta(1), epsilon(1). CF(0) has three main subunits: a(1), b(2) and c(9-12). The alpha and beta chains form an alternating ring which encloses part of the gamma chain. CF(1) is attached to CF(0) by a central stalk formed by the gamma and epsilon chains, while a peripheral stalk is formed by the delta and b chains.

It is found in the cell membrane. The enzyme catalyses ATP + H2O + 4 H(+)(in) = ADP + phosphate + 5 H(+)(out). In terms of biological role, produces ATP from ADP in the presence of a proton gradient across the membrane. The catalytic sites are hosted primarily by the beta subunits. The sequence is that of ATP synthase subunit beta from Lacticaseibacillus casei (Lactobacillus casei).